We begin with the raw amino-acid sequence, 432 residues long: Glutamate-1-semialdehyde 2,1-aminomutase (432 aa).

An N6-(pyridoxal phosphate)lysine modification is found at lysine 272.

The protein belongs to the class-III pyridoxal-phosphate-dependent aminotransferase family. HemL subfamily. Homodimer. Requires pyridoxal 5'-phosphate as cofactor.

Its subcellular location is the cytoplasm. The catalysed reaction is (S)-4-amino-5-oxopentanoate = 5-aminolevulinate. It functions in the pathway porphyrin-containing compound metabolism; protoporphyrin-IX biosynthesis; 5-aminolevulinate from L-glutamyl-tRNA(Glu): step 2/2. The protein operates within porphyrin-containing compound metabolism; chlorophyll biosynthesis. This chain is Glutamate-1-semialdehyde 2,1-aminomutase, found in Nostoc sp. (strain PCC 7120 / SAG 25.82 / UTEX 2576).